The sequence spans 757 residues: Probable ubiquitin carboxyl-terminal hydrolase MINDY-4 (757 aa).

2 disordered regions span residues 152 to 173 (FVSS…GETP) and 190 to 334 (SLDV…LPGG). Over residues 190–201 (SLDVKRMGENSR) the composition is skewed to basic and acidic residues. Phosphoserine occurs at positions 219 and 223. Low complexity predominate over residues 232-242 (SSPSSSSTQPQ). Polar residues predominate over residues 254–277 (CTQQDILASSNSSPSRTSLGQLSE). S289 is modified (phosphoserine). Residues 299-310 (PPWDRARPRDPS) show a composition bias toward basic and acidic residues. Residue C456 is the Nucleophile of the active site. The active-site Proton acceptor is H677.

This sequence belongs to the MINDY deubiquitinase family. FAM188 subfamily.

The catalysed reaction is Thiol-dependent hydrolysis of ester, thioester, amide, peptide and isopeptide bonds formed by the C-terminal Gly of ubiquitin (a 76-residue protein attached to proteins as an intracellular targeting signal).. Probable hydrolase that can remove 'Lys-48'-linked conjugated ubiquitin from proteins. In Homo sapiens (Human), this protein is Probable ubiquitin carboxyl-terminal hydrolase MINDY-4.